The sequence spans 194 residues: Probable thymidylate kinase (194 aa).

8–15 (GIDGSGKT) serves as a coordination point for ATP.

It belongs to the thymidylate kinase family.

The catalysed reaction is dTMP + ATP = dTDP + ADP. This is Probable thymidylate kinase from Sulfolobus acidocaldarius (strain ATCC 33909 / DSM 639 / JCM 8929 / NBRC 15157 / NCIMB 11770).